We begin with the raw amino-acid sequence, 449 residues long: Phosphoglucosamine mutase (449 aa).

Serine 100 serves as the catalytic Phosphoserine intermediate. Residues serine 100, aspartate 241, aspartate 243, and aspartate 245 each contribute to the Mg(2+) site. A Phosphoserine modification is found at serine 100.

Belongs to the phosphohexose mutase family. It depends on Mg(2+) as a cofactor. In terms of processing, activated by phosphorylation.

It catalyses the reaction alpha-D-glucosamine 1-phosphate = D-glucosamine 6-phosphate. Its function is as follows. Catalyzes the conversion of glucosamine-6-phosphate to glucosamine-1-phosphate. The protein is Phosphoglucosamine mutase of Clostridium botulinum (strain Loch Maree / Type A3).